Consider the following 530-residue polypeptide: MEDDSLYLGGEWQFNHFSKLTSSRPDAAFAEIQRTSLPEKSPLSCETRVDLCDDLAPVARQLAPREKLPLSSRRPAAVGAGLQNMGNTCYVNASLQCLTYTPPLANYMLSREHSQTCHRHKGCMLCTMQAHITRALHNPGHVIQPSQALAAGFHRGKQEDAHEFLMFTVDAMKKACLPGHKQVDHHSKDTTLIHQIFGGYWRSQIKCLHCHGISDTFDPYLDIALDIQAAQSVQQALEQLVKPEELNGENAYHCGVCLQRAPASKTLTLHTSAKVLILVLKRFSDVTGNKIAKNVQYPECLDMQPYMSQPNTGPLVYVLYAVLVHAGWSCHNGHYFSYVKAQEGQWYKMDDAEVTASSITSVLSQQAYVLFYIQKSEWERHSESVSRGREPRALGAEDTDRRATQGELKRDHPCLQAPELDEHLVERATQESTLDHWKFLQEQNKTKPEFNVRKVEGTLPPDVLVIHQSKYKCGMKNHHPEQQSSLLNLSSTTPTHQESMNTGTLASLRGRARRSKGKNKHSKRALLVCQ.

The USP domain occupies 80 to 375 (AGLQNMGNTC…QAYVLFYIQK (296 aa)). Catalysis depends on cysteine 89, which acts as the Nucleophile. Histidine 334 functions as the Proton acceptor in the catalytic mechanism. 2 stretches are compositionally biased toward basic and acidic residues: residues 382–392 (SESVSRGREPR) and 398–413 (DTDR…RDHP). Disordered stretches follow at residues 382–413 (SESV…RDHP) and 509–530 (RGRA…LVCQ). A compositionally biased stretch (basic residues) spans 510–524 (GRARRSKGKNKHSKR).

Belongs to the peptidase C19 family. USP17 subfamily.

It localises to the nucleus. The protein localises to the endoplasmic reticulum. The enzyme catalyses Thiol-dependent hydrolysis of ester, thioester, amide, peptide and isopeptide bonds formed by the C-terminal Gly of ubiquitin (a 76-residue protein attached to proteins as an intracellular targeting signal).. Its function is as follows. Deubiquitinating enzyme that removes conjugated ubiquitin from specific proteins to regulate different cellular processes that may include cell proliferation, progression through the cell cycle, apoptosis, cell migration, and the cellular response to viral infection. This is Ubiquitin carboxyl-terminal hydrolase 17-like protein 20 (USP17L20) from Homo sapiens (Human).